The following is a 201-amino-acid chain: MSEALNELASYLREARGALIADAEVKYGELTVTAKAENLIALLTFLRDDVQCGFVSFIDVCGVDYPQRPDRFDVVYHLLSPRQNQRVRVKVATGENDPVPSATSVFPGADWFEREAYDMYGILFTGHPDLRRILTDYGFEGYPLRKDFPLTGFVEVRYDNEAKRVVYEPVELKQEFRNFDFLSPWEGTEYVLPGDEKARPR.

Belongs to the complex I 30 kDa subunit family. As to quaternary structure, NDH-1 is composed of 14 different subunits. Subunits NuoB, C, D, E, F, and G constitute the peripheral sector of the complex.

The protein localises to the cell inner membrane. The enzyme catalyses a quinone + NADH + 5 H(+)(in) = a quinol + NAD(+) + 4 H(+)(out). In terms of biological role, NDH-1 shuttles electrons from NADH, via FMN and iron-sulfur (Fe-S) centers, to quinones in the respiratory chain. The immediate electron acceptor for the enzyme in this species is believed to be ubiquinone. Couples the redox reaction to proton translocation (for every two electrons transferred, four hydrogen ions are translocated across the cytoplasmic membrane), and thus conserves the redox energy in a proton gradient. This Rhizobium meliloti (strain 1021) (Ensifer meliloti) protein is NADH-quinone oxidoreductase subunit C 1.